The sequence spans 213 residues: Amelotin (213 aa).

A signal peptide spans methionine 1–serine 16. 2 disordered regions span residues asparagine 22–glutamine 43 and glycine 162–glutamine 213. Polar residues predominate over residues threonine 33–glutamine 43. Residues glycine 169–valine 180 are compositionally biased toward low complexity.

The protein belongs to the amelotin family. Post-translationally, phosphorylated by FAM20C in vitro. In terms of processing, O-glycosylated. As to expression, specifically expressed in maturation-stage ameloblasts.

The protein localises to the secreted. In terms of biological role, is a promoter of calcium phosphate mineralization, playing a critical role in the formation of the compact, mineralized, aprismatic enamel surface layer during the maturation stage of amelogenesis. The protein is Amelotin (Amtn) of Mus musculus (Mouse).